The sequence spans 263 residues: Putative TATA-binding protein pB263R (263 aa).

It belongs to the asfivirus B263R family.

In terms of biological role, putative TATA-binding protein. This is Putative TATA-binding protein pB263R from African swine fever virus (isolate Pig/Kenya/KEN-50/1950) (ASFV).